The chain runs to 120 residues: Large ribosomal subunit protein bL19 (120 aa).

It belongs to the bacterial ribosomal protein bL19 family.

This protein is located at the 30S-50S ribosomal subunit interface and may play a role in the structure and function of the aminoacyl-tRNA binding site. The chain is Large ribosomal subunit protein bL19 from Renibacterium salmoninarum (strain ATCC 33209 / DSM 20767 / JCM 11484 / NBRC 15589 / NCIMB 2235).